Consider the following 285-residue polypeptide: Chalcone synthase 6-4 (285 aa).

Residue cysteine 60 is part of the active site.

This sequence belongs to the thiolase-like superfamily. Chalcone/stilbene synthases family.

It carries out the reaction (E)-4-coumaroyl-CoA + 3 malonyl-CoA + 3 H(+) = 2',4,4',6'-tetrahydroxychalcone + 3 CO2 + 4 CoA. It functions in the pathway secondary metabolite biosynthesis; flavonoid biosynthesis. In terms of biological role, the primary product of this enzyme is 4,2',4',6'-tetrahydroxychalcone (also termed naringenin-chalcone or chalcone) which can under specific conditions spontaneously isomerize into naringenin. This is Chalcone synthase 6-4 (CHS6-4) from Medicago sativa (Alfalfa).